Reading from the N-terminus, the 145-residue chain is 3-hydroxyacyl-[acyl-carrier-protein] dehydratase FabZ (145 aa).

The active site involves His-49.

The protein belongs to the thioester dehydratase family. FabZ subfamily.

It is found in the cytoplasm. It catalyses the reaction a (3R)-hydroxyacyl-[ACP] = a (2E)-enoyl-[ACP] + H2O. In terms of biological role, involved in unsaturated fatty acids biosynthesis. Catalyzes the dehydration of short chain beta-hydroxyacyl-ACPs and long chain saturated and unsaturated beta-hydroxyacyl-ACPs. The protein is 3-hydroxyacyl-[acyl-carrier-protein] dehydratase FabZ of Rickettsia africae (strain ESF-5).